Reading from the N-terminus, the 521-residue chain is C-22 sterol desaturase erg5 (521 aa).

The helical transmembrane segment at Ala30–Ile50 threads the bilayer.

The protein belongs to the cytochrome P450 family. Heme is required as a cofactor.

The protein localises to the endoplasmic reticulum membrane. The catalysed reaction is 5-dehydroepisterol + NADPH + O2 + H(+) = ergosta-5,7,22,24(28)-tetraen-3beta-ol + NADP(+) + 2 H2O. It participates in steroid metabolism; ergosterol biosynthesis. Functionally, C-22 sterol desaturase; part of the third module of ergosterol biosynthesis pathway that includes the late steps of the pathway. Erg5 converts 5-dehydroepisterol into ergosta-5,7,22,24(28)-tetraen-3beta-ol by forming the C-22(23) double bond in the sterol side chain. The third module or late pathway involves the ergosterol synthesis itself through consecutive reactions that mainly occur in the endoplasmic reticulum (ER) membrane. Firstly, the squalene synthase erg9 catalyzes the condensation of 2 farnesyl pyrophosphate moieties to form squalene, which is the precursor of all steroids. Squalene synthase is crucial for balancing the incorporation of farnesyl diphosphate (FPP) into sterol and nonsterol isoprene synthesis. Secondly, squalene is converted into lanosterol by the consecutive action of the squalene epoxidase erg1 and the lanosterol synthase erg7. Then, the delta(24)-sterol C-methyltransferase erg6 methylates lanosterol at C-24 to produce eburicol. Eburicol is the substrate of the sterol 14-alpha demethylase encoded by cyp51A and cyp51B, to yield 4,4,24-trimethyl ergosta-8,14,24(28)-trienol. The C-14 reductase erg24 then reduces the C14=C15 double bond which leads to 4,4-dimethylfecosterol. A sequence of further demethylations at C-4, involving the C-4 demethylation complex containing the C-4 methylsterol oxidases erg25A or erg25B, the sterol-4-alpha-carboxylate 3-dehydrogenase erg26 and the 3-keto-steroid reductase erg27, leads to the production of fecosterol via 4-methylfecosterol. The C-8 sterol isomerase erg2 then catalyzes the reaction which results in unsaturation at C-7 in the B ring of sterols and thus converts fecosterol to episterol. The sterol-C5-desaturase erg3B then catalyzes the introduction of a C-5 double bond in the B ring to produce 5-dehydroepisterol. The 2 other sterol-C5-desaturases, erg3A and erg3C, seem to be less important in ergosterol biosynthesis. The C-22 sterol desaturase erg5 further converts 5-dehydroepisterol into ergosta-5,7,22,24(28)-tetraen-3beta-ol by forming the C-22(23) double bond in the sterol side chain. Finally, ergosta-5,7,22,24(28)-tetraen-3beta-ol is substrate of the C-24(28) sterol reductases erg4A and erg4B to produce ergosterol. Possible alternative sterol biosynthetic pathways might exist from fecosterol to ergosterol, depending on the activities of the erg3 isoforms. This is C-22 sterol desaturase erg5 from Aspergillus fumigatus (strain ATCC MYA-4609 / CBS 101355 / FGSC A1100 / Af293) (Neosartorya fumigata).